The following is an 801-amino-acid chain: Elongation factor G, mitochondrial (801 aa).

The N-terminal 62 residues, 1–62 (MRTPTLARLP…LSKHFQQRRN (62 aa)), are a transit peptide targeting the mitochondrion. The region spanning 99-386 (SRVRNIGIAA…GVIDYLPNPS (288 aa)) is the tr-type G domain. GTP-binding positions include 108-115 (AHIDSGKT), 184-188 (DTPGH), and 238-241 (NKMD).

It belongs to the TRAFAC class translation factor GTPase superfamily. Classic translation factor GTPase family. EF-G/EF-2 subfamily.

The protein resides in the mitochondrion. It participates in protein biosynthesis; polypeptide chain elongation. Functionally, mitochondrial GTPase that catalyzes the GTP-dependent ribosomal translocation step during translation elongation. During this step, the ribosome changes from the pre-translocational (PRE) to the post-translocational (POST) state as the newly formed A-site-bound peptidyl-tRNA and P-site-bound deacylated tRNA move to the P and E sites, respectively. Catalyzes the coordinated movement of the two tRNA molecules, the mRNA and conformational changes in the ribosome. In Aspergillus niger (strain ATCC MYA-4892 / CBS 513.88 / FGSC A1513), this protein is Elongation factor G, mitochondrial (mef1).